The sequence spans 223 residues: Uracil-DNA glycosylase (223 aa).

Aspartate 64 (proton acceptor) is an active-site residue.

The protein belongs to the uracil-DNA glycosylase (UDG) superfamily. UNG family.

The protein resides in the cytoplasm. It carries out the reaction Hydrolyzes single-stranded DNA or mismatched double-stranded DNA and polynucleotides, releasing free uracil.. Excises uracil residues from the DNA which can arise as a result of misincorporation of dUMP residues by DNA polymerase or due to deamination of cytosine. The polypeptide is Uracil-DNA glycosylase (Desulfitobacterium hafniense (strain DSM 10664 / DCB-2)).